Here is a 385-residue protein sequence, read N- to C-terminus: Branched-chain-amino-acid aminotransferase, cytosolic (385 aa).

Lys-221 carries the N6-(pyridoxal phosphate)lysine modification.

It belongs to the class-IV pyridoxal-phosphate-dependent aminotransferase family. Homodimer. The cofactor is pyridoxal 5'-phosphate. As to expression, expressed in muscles.

It localises to the cytoplasm. The enzyme catalyses L-leucine + 2-oxoglutarate = 4-methyl-2-oxopentanoate + L-glutamate. It catalyses the reaction L-isoleucine + 2-oxoglutarate = (S)-3-methyl-2-oxopentanoate + L-glutamate. It carries out the reaction L-valine + 2-oxoglutarate = 3-methyl-2-oxobutanoate + L-glutamate. Functionally, catalyzes the first reaction in the catabolism of the essential branched chain amino acids leucine, isoleucine, and valine. The protein is Branched-chain-amino-acid aminotransferase, cytosolic (BCAT1) of Ovis aries (Sheep).